Here is a 209-residue protein sequence, read N- to C-terminus: Large ribosomal subunit protein uL3 (209 aa).

Belongs to the universal ribosomal protein uL3 family. As to quaternary structure, part of the 50S ribosomal subunit. Forms a cluster with proteins L14 and L19.

In terms of biological role, one of the primary rRNA binding proteins, it binds directly near the 3'-end of the 23S rRNA, where it nucleates assembly of the 50S subunit. The sequence is that of Large ribosomal subunit protein uL3 from Brevibacillus brevis (strain 47 / JCM 6285 / NBRC 100599).